A 443-amino-acid polypeptide reads, in one-letter code: Inactive polypeptide N-acetylgalactosaminyltransferase-like protein 5 (443 aa).

Residues 1-4 (MRNA) lie on the Cytoplasmic side of the membrane. A helical; Signal-anchor for type II membrane protein membrane pass occupies residues 5-27 (IIRCLFYGSLTFGIWTALLFIYL). The Lumenal portion of the chain corresponds to 28–443 (HHNHVSNWQK…PELEASVNRS (416 aa)). Asn87 carries N-linked (GlcNAc...) asparagine glycosylation. 2 cysteine pairs are disulfide-bonded: Cys124–Cys355 and Cys346–Cys422. The segment at 133–243 (LPTASIVICF…RVWLEPLLHA (111 aa)) is catalytic subdomain A. Substrate is bound by residues Asp174 and Arg204. Residue Asp227 coordinates Mn(2+). Ser228 serves as a coordination point for substrate. Residue His229 participates in Mn(2+) binding. A catalytic subdomain B region spans residues 301–363 (PIRSPAMSGG…PCSRVGHISK (63 aa)). Trp332 is a substrate binding site. His360 contacts Mn(2+).

It belongs to the glycosyltransferase 2 family. GalNAc-T subfamily. Mn(2+) is required as a cofactor. In terms of tissue distribution, expressed in testis.

It is found in the late endosome membrane. Functionally, probable inactive glycosyltransferase required during spermatid development. May participate in protein loading into the acrosomes and accumulation of ubiquitin-proteasome systems around the head-tail coupling apparatus region. This is Inactive polypeptide N-acetylgalactosaminyltransferase-like protein 5 (GALNTL5) from Macaca fascicularis (Crab-eating macaque).